Consider the following 194-residue polypeptide: Lipoprotein signal peptidase (194 aa).

Helical transmembrane passes span Thr-75–Ser-95 and Thr-97–Asp-117. Residues Asp-126 and Asp-144 contribute to the active site. A helical transmembrane segment spans residues Tyr-135–Met-155.

Belongs to the peptidase A8 family.

Its subcellular location is the cell inner membrane. It catalyses the reaction Release of signal peptides from bacterial membrane prolipoproteins. Hydrolyzes -Xaa-Yaa-Zaa-|-(S,diacylglyceryl)Cys-, in which Xaa is hydrophobic (preferably Leu), and Yaa (Ala or Ser) and Zaa (Gly or Ala) have small, neutral side chains.. It functions in the pathway protein modification; lipoprotein biosynthesis (signal peptide cleavage). Its function is as follows. This protein specifically catalyzes the removal of signal peptides from prolipoproteins. In Rickettsia prowazekii (strain Madrid E), this protein is Lipoprotein signal peptidase.